Reading from the N-terminus, the 601-residue chain is DNA ligase (601 aa).

An ATP-binding site is contributed by Asp-258. The active-site N6-AMP-lysine intermediate is Lys-260. Residues Arg-265, Arg-280, Glu-310, Phe-350, Arg-427, and Lys-433 each contribute to the ATP site. The tract at residues 568 to 601 (DKSPEDATTTDEILEMYNKQPKKKIESPPIDESV) is disordered.

Belongs to the ATP-dependent DNA ligase family. Mg(2+) serves as cofactor.

It carries out the reaction ATP + (deoxyribonucleotide)n-3'-hydroxyl + 5'-phospho-(deoxyribonucleotide)m = (deoxyribonucleotide)n+m + AMP + diphosphate.. Its function is as follows. DNA ligase that seals nicks in double-stranded DNA during DNA replication, DNA recombination and DNA repair. In Saccharolobus islandicus (strain Y.N.15.51 / Yellowstone #2) (Sulfolobus islandicus), this protein is DNA ligase.